The sequence spans 300 residues: 4-hydroxy-tetrahydrodipicolinate synthase (300 aa).

Threonine 46 contacts pyruvate. Residue tyrosine 134 is the Proton donor/acceptor of the active site. Lysine 162 functions as the Schiff-base intermediate with substrate in the catalytic mechanism. Residue valine 204 coordinates pyruvate.

This sequence belongs to the DapA family. As to quaternary structure, homotetramer; dimer of dimers.

The protein resides in the cytoplasm. The catalysed reaction is L-aspartate 4-semialdehyde + pyruvate = (2S,4S)-4-hydroxy-2,3,4,5-tetrahydrodipicolinate + H2O + H(+). The protein operates within amino-acid biosynthesis; L-lysine biosynthesis via DAP pathway; (S)-tetrahydrodipicolinate from L-aspartate: step 3/4. Functionally, catalyzes the condensation of (S)-aspartate-beta-semialdehyde [(S)-ASA] and pyruvate to 4-hydroxy-tetrahydrodipicolinate (HTPA). The protein is 4-hydroxy-tetrahydrodipicolinate synthase of Heliobacterium modesticaldum (strain ATCC 51547 / Ice1).